The following is a 231-amino-acid chain: Secreted LysM effector LysM13 (231 aa).

An N-terminal signal peptide occupies residues Met1–Ala19. 7 N-linked (GlcNAc...) asparagine glycosylation sites follow: Asn30, Asn34, Asn77, Asn100, Asn130, Asn201, and Asn226. Residues Thr38 to Ile82 form the LysM domain.

This sequence belongs to the secreted LysM effector family.

Its subcellular location is the secreted. In terms of biological role, secreted LysM effector that might have a role in sequestration of chitin oligosaccharides (breakdown products of fungal cell walls that are released during invasion and act as triggers of host immunity) to dampen host defense. In Penicillium expansum (Blue mold rot fungus), this protein is Secreted LysM effector LysM13.